The following is a 188-amino-acid chain: Adenine phosphoribosyltransferase (188 aa).

The protein belongs to the purine/pyrimidine phosphoribosyltransferase family. In terms of assembly, homodimer.

The protein localises to the cytoplasm. It catalyses the reaction AMP + diphosphate = 5-phospho-alpha-D-ribose 1-diphosphate + adenine. It functions in the pathway purine metabolism; AMP biosynthesis via salvage pathway; AMP from adenine: step 1/1. Functionally, catalyzes a salvage reaction resulting in the formation of AMP, that is energically less costly than de novo synthesis. The protein is Adenine phosphoribosyltransferase of Neisseria meningitidis serogroup A / serotype 4A (strain DSM 15465 / Z2491).